The primary structure comprises 403 residues: Tyrosine--tRNA ligase (403 aa).

A 'HIGH' region motif is present at residues 42-51; that stretch reads PTAPDLHLGH. Positions 226-230 match the 'KMSKS' region motif; the sequence is KMSKS. Lysine 229 contributes to the ATP binding site. Residues 336-396 enclose the S4 RNA-binding domain; it reads MPISAVLNKA…GKKAFGRVTL (61 aa).

Belongs to the class-I aminoacyl-tRNA synthetase family. TyrS type 2 subfamily. Homodimer.

It localises to the cytoplasm. It catalyses the reaction tRNA(Tyr) + L-tyrosine + ATP = L-tyrosyl-tRNA(Tyr) + AMP + diphosphate + H(+). Its function is as follows. Catalyzes the attachment of tyrosine to tRNA(Tyr) in a two-step reaction: tyrosine is first activated by ATP to form Tyr-AMP and then transferred to the acceptor end of tRNA(Tyr). This chain is Tyrosine--tRNA ligase, found in Pseudomonas savastanoi pv. phaseolicola (strain 1448A / Race 6) (Pseudomonas syringae pv. phaseolicola (strain 1448A / Race 6)).